The sequence spans 93 residues: Small ribosomal subunit protein uS19 (93 aa).

This sequence belongs to the universal ribosomal protein uS19 family.

Functionally, protein S19 forms a complex with S13 that binds strongly to the 16S ribosomal RNA. In Mycolicibacterium smegmatis (strain ATCC 700084 / mc(2)155) (Mycobacterium smegmatis), this protein is Small ribosomal subunit protein uS19.